Here is a 124-residue protein sequence, read N- to C-terminus: Small ribosomal subunit protein uS12 (124 aa).

3-methylthioaspartic acid is present on D89.

It belongs to the universal ribosomal protein uS12 family. Part of the 30S ribosomal subunit. Contacts proteins S8 and S17. May interact with IF1 in the 30S initiation complex.

Its function is as follows. With S4 and S5 plays an important role in translational accuracy. Functionally, interacts with and stabilizes bases of the 16S rRNA that are involved in tRNA selection in the A site and with the mRNA backbone. Located at the interface of the 30S and 50S subunits, it traverses the body of the 30S subunit contacting proteins on the other side and probably holding the rRNA structure together. The combined cluster of proteins S8, S12 and S17 appears to hold together the shoulder and platform of the 30S subunit. The chain is Small ribosomal subunit protein uS12 from Hamiltonella defensa subsp. Acyrthosiphon pisum (strain 5AT).